The following is a 1055-amino-acid chain: Bifunctional fucokinase/GDP-fucose pyrophosphorylase (1055 aa).

The GDP-fucose pyrophosphorylase stretch occupies residues 34–565 (WDAIVLTAAS…SSQRVSLEEL (532 aa)). Residues 693–1055 (GKSHSENHIS…VKVYNWSICI (363 aa)) are L-fucokinase. 826–836 (PRGSGLGTSSI) lines the ATP pocket.

Belongs to the GHMP kinase family. The cofactor is Mn(2+). Mg(2+) is required as a cofactor. As to expression, ubiquitous. Highest expression in flower buds.

It catalyses the reaction L-fucose + ATP = beta-L-fucose 1-phosphate + ADP + H(+). The enzyme catalyses beta-L-fucose 1-phosphate + GTP + H(+) = GDP-beta-L-fucose + diphosphate. In terms of biological role, bifunctional enzyme involved in the salvage pathway which converts free L-fucose to GDP-L-fucose. Catalyzes two successive reactions, the ATP-dependent phosphorylation of L-fucose to L-fucose 1-phosphate, and its guanylylation to GDP-L-fucose. The sugar-1-kinase activity has a strict substrate specificity for L-fucose and ATP. The pyrophosphorylase activity has a strict substrate specificity for L-fucose 1-phosphate and GTP. This is Bifunctional fucokinase/GDP-fucose pyrophosphorylase (FKGP) from Arabidopsis thaliana (Mouse-ear cress).